Here is a 452-residue protein sequence, read N- to C-terminus: GTPase Der (452 aa).

2 EngA-type G domains span residues 4–169 and 177–352; these read PIVA…PPPE and IKVA…EEHR. Residues 10-17, 57-61, 120-123, 183-190, 230-234, and 295-298 each bind GTP; these read GRPNVGKS, DTGGL, NKCE, DTAGI, and NKWD. Residues 353–438 enclose the KH-like domain; it reads RRVTTAVINE…PIRLLWRGKK (86 aa).

Belongs to the TRAFAC class TrmE-Era-EngA-EngB-Septin-like GTPase superfamily. EngA (Der) GTPase family. In terms of assembly, associates with the 50S ribosomal subunit.

GTPase that plays an essential role in the late steps of ribosome biogenesis. The sequence is that of GTPase Der from Rippkaea orientalis (strain PCC 8801 / RF-1) (Cyanothece sp. (strain PCC 8801)).